The primary structure comprises 274 residues: Thiamine kinase (274 aa).

This sequence belongs to the thiamine kinase family.

The catalysed reaction is thiamine + ATP = thiamine phosphate + ADP + H(+). It functions in the pathway cofactor biosynthesis; thiamine diphosphate biosynthesis; thiamine phosphate from thiamine: step 1/1. Its function is as follows. Catalyzes the ATP-dependent phosphorylation of thiamine to thiamine phosphate. Is involved in thiamine salvage. This is Thiamine kinase from Escherichia coli O17:K52:H18 (strain UMN026 / ExPEC).